Consider the following 504-residue polypeptide: Lysine--tRNA ligase (504 aa).

Positions 414 and 421 each coordinate Mg(2+).

This sequence belongs to the class-II aminoacyl-tRNA synthetase family. As to quaternary structure, homodimer. Mg(2+) is required as a cofactor.

It is found in the cytoplasm. The catalysed reaction is tRNA(Lys) + L-lysine + ATP = L-lysyl-tRNA(Lys) + AMP + diphosphate. In Photorhabdus laumondii subsp. laumondii (strain DSM 15139 / CIP 105565 / TT01) (Photorhabdus luminescens subsp. laumondii), this protein is Lysine--tRNA ligase.